Consider the following 397-residue polypeptide: Subtilisin-like protease 12 (397 aa).

Positions 1–19 (MSIFKLMVIYFTLFWVVNA) are cleaved as a signal peptide. A propeptide spanning residues 20–116 (AQLLDLDSHG…VEPNREMKAA (97 aa)) is cleaved from the precursor. In terms of domain architecture, Inhibitor I9 spans 35–115 (YIVVMKNGVS…FVEPNREMKA (81 aa)). Residues asparagine 123, asparagine 136, and asparagine 150 are each glycosylated (N-linked (GlcNAc...) asparagine). The region spanning 125–397 (TWGLARISHM…DKLLYNGSGA (273 aa)) is the Peptidase S8 domain. Residues aspartate 157 and histidine 188 each act as charge relay system in the active site. N-linked (GlcNAc...) asparagine glycans are attached at residues asparagine 249, asparagine 305, and asparagine 334. The active-site Charge relay system is the serine 343. Residues asparagine 385 and asparagine 393 are each glycosylated (N-linked (GlcNAc...) asparagine).

The protein belongs to the peptidase S8 family.

The protein localises to the secreted. In terms of biological role, secreted subtilisin-like serine protease with keratinolytic activity that contributes to pathogenicity. The protein is Subtilisin-like protease 12 (SUB12) of Arthroderma gypseum (strain ATCC MYA-4604 / CBS 118893) (Microsporum gypseum).